A 537-amino-acid polypeptide reads, in one-letter code: Cytochrome P450 86A8 (537 aa).

A helical membrane pass occupies residues 3-23; sequence ISTALMILSAITAYFLWLTFI. Cysteine 458 contacts heme.

It belongs to the cytochrome P450 family. Heme is required as a cofactor. Expressed in leaves, stems, flowers and siliques. Expressed at low levels in roots.

It is found in the membrane. It catalyses the reaction an organic molecule + reduced [NADPH--hemoprotein reductase] + O2 = an alcohol + oxidized [NADPH--hemoprotein reductase] + H2O + H(+). Catalyzes the omega-hydroxylation of various fatty acids (FA). Acts on saturated and unsaturated fatty acids with chain lengths from C12 to C18. May be involved in the biosynthesis of cutin in the epidermis which prevents post-genital organ fusions. Hydroxylated FAs may be important for trichome differentiation, establishment of apical dominance and senescence. In Arabidopsis thaliana (Mouse-ear cress), this protein is Cytochrome P450 86A8 (CYP86A8).